A 339-amino-acid polypeptide reads, in one-letter code: 5-dehydro-2-deoxygluconokinase (339 aa).

Belongs to the carbohydrate kinase PfkB family.

The enzyme catalyses 5-dehydro-2-deoxy-D-gluconate + ATP = 6-phospho-5-dehydro-2-deoxy-D-gluconate + ADP + H(+). It participates in polyol metabolism; myo-inositol degradation into acetyl-CoA; acetyl-CoA from myo-inositol: step 5/7. In terms of biological role, catalyzes the phosphorylation of 5-dehydro-2-deoxy-D-gluconate (2-deoxy-5-keto-D-gluconate or DKG) to 6-phospho-5-dehydro-2-deoxy-D-gluconate (DKGP). The sequence is that of 5-dehydro-2-deoxygluconokinase from Clostridium botulinum (strain Alaska E43 / Type E3).